A 121-amino-acid polypeptide reads, in one-letter code: Large ribosomal subunit protein uL18 (121 aa).

The protein belongs to the universal ribosomal protein uL18 family. In terms of assembly, part of the 50S ribosomal subunit; part of the 5S rRNA/L5/L18/L25 subcomplex. Contacts the 5S and 23S rRNAs.

This is one of the proteins that bind and probably mediate the attachment of the 5S RNA into the large ribosomal subunit, where it forms part of the central protuberance. The sequence is that of Large ribosomal subunit protein uL18 from Albidiferax ferrireducens (strain ATCC BAA-621 / DSM 15236 / T118) (Rhodoferax ferrireducens).